The chain runs to 151 residues: Spore coat polysaccharide biosynthesis protein SpsL (151 aa).

This sequence to dTDP-4-dehydrorhamnose reductase.

Its pathway is spore coat biogenesis; spore coat polysaccharide biosynthesis. The sequence is that of Spore coat polysaccharide biosynthesis protein SpsL (spsL) from Bacillus subtilis (strain 168).